Here is a 751-residue protein sequence, read N- to C-terminus: Polyadenylate-binding protein, cytoplasmic and nuclear (751 aa).

Polar residues-rich tracts occupy residues 1–26 (MSAE…NPAA) and 36–50 (ESAS…NQPH). The disordered stretch occupies residues 1–50 (MSAEVSTTPAADNTVNGTPEATNPAATSAPEVTAVESASPSATPSANQPH). 4 RRM domains span residues 52-130 (ASLY…WSQR), 140-217 (GNVF…HHIS), 233-310 (TNVY…RAQK), and 336-458 (VNLY…LAQR). Disordered regions lie at residues 371 to 413 (TVTA…KKTE) and 601 to 643 (GQGM…REEV). Basic and acidic residues predominate over residues 379 to 413 (ESEKEKESNKENEKEGEEKTEEKPKESEEEAKKTE). A compositionally biased stretch (gly residues) spans 603–629 (GMRGPGYGQGRGGAPVQGGPRPQGGRG). Residues 646 to 723 (TGGLTAQTLN…ALSVYDEYMK (78 aa)) enclose the PABC domain. The interval 725–751 (KGEGEAPAEPAKPKEDAAETATEENKS) is disordered. The span at 735-751 (AKPKEDAAETATEENKS) shows a compositional bias: basic and acidic residues.

Belongs to the polyadenylate-binding protein type-1 family.

The protein localises to the cytoplasm. Its subcellular location is the nucleus. Its function is as follows. Binds the poly(A) tail of mRNA. Appears to be an important mediator of the multiple roles of the poly(A) tail in mRNA biogenesis, stability and translation. In the nucleus, involved in both mRNA cleavage and polyadenylation. Is also required for efficient mRNA export to the cytoplasm. Acts in concert with a poly(A)-specific nuclease (PAN) to affect poly(A) tail shortening, which may occur concomitantly with either nucleocytoplasmic mRNA transport or translational initiation. In the cytoplasm, stimulates translation initiation and regulates mRNA decay through translation termination-coupled poly(A) shortening, probably mediated by PAN. The sequence is that of Polyadenylate-binding protein, cytoplasmic and nuclear (pab1) from Neosartorya fischeri (strain ATCC 1020 / DSM 3700 / CBS 544.65 / FGSC A1164 / JCM 1740 / NRRL 181 / WB 181) (Aspergillus fischerianus).